A 225-amino-acid chain; its full sequence is uncharacterized protein (225 aa).

This is an uncharacterized protein from Amsacta moorei entomopoxvirus (AmEPV).